The chain runs to 152 residues: Ribosome maturation factor RimP (152 aa).

This sequence belongs to the RimP family.

It localises to the cytoplasm. In terms of biological role, required for maturation of 30S ribosomal subunits. The protein is Ribosome maturation factor RimP of Burkholderia cenocepacia (strain ATCC BAA-245 / DSM 16553 / LMG 16656 / NCTC 13227 / J2315 / CF5610) (Burkholderia cepacia (strain J2315)).